We begin with the raw amino-acid sequence, 425 residues long: Elongation factor 1-alpha (425 aa).

Residues 5–221 enclose the tr-type G domain; the sequence is KPHMNLAVIG…NALSEPEKPT (217 aa). Residues 14–21 form a G1 region; sequence GHIDHGKS. GTP is bound at residue 14–21; it reads GHIDHGKS. Position 21 (Ser21) interacts with Mg(2+). Positions 70–74 are G2; that stretch reads GITID. A G3 region spans residues 91 to 94; sequence DCPG. Residues 91–95 and 146–149 each bind GTP; these read DCPGH and NKMD. The G4 stretch occupies residues 146–149; sequence NKMD. A G5 region spans residues 185–187; the sequence is SAF.

It belongs to the TRAFAC class translation factor GTPase superfamily. Classic translation factor GTPase family. EF-Tu/EF-1A subfamily.

The protein localises to the cytoplasm. The catalysed reaction is GTP + H2O = GDP + phosphate + H(+). Functionally, GTP hydrolase that promotes the GTP-dependent binding of aminoacyl-tRNA to the A-site of ribosomes during protein biosynthesis. This chain is Elongation factor 1-alpha, found in Methanoculleus marisnigri (strain ATCC 35101 / DSM 1498 / JR1).